A 531-amino-acid polypeptide reads, in one-letter code: Ribosomal protein uS12 methylthiotransferase RimO (531 aa).

2 stretches are compositionally biased toward polar residues: residues 1–19 and 55–67; these read MPNI…SQPA and HNQN…SSEV. Positions 1–77 are disordered; sequence MPNISTESVN…VSAASAKTTT (77 aa). Residues 68-77 show a composition bias toward low complexity; sequence VSAASAKTTT. Residues 88–198 form the MTTase N-terminal domain; that stretch reads PKIGFVSLGC…VIRAVALHVP (111 aa). [4Fe-4S] cluster contacts are provided by C97, C133, C162, C236, C240, and C243. The Radical SAM core domain occupies 222 to 459; sequence LTPSHYAYLK…MTLQQDISAQ (238 aa). Positions 462-531 constitute a TRAM domain; sequence QEKIGKTLMV…EYDLFASYKG (70 aa).

This sequence belongs to the methylthiotransferase family. RimO subfamily. The cofactor is [4Fe-4S] cluster.

It localises to the cytoplasm. The catalysed reaction is L-aspartate(89)-[ribosomal protein uS12]-hydrogen + (sulfur carrier)-SH + AH2 + 2 S-adenosyl-L-methionine = 3-methylsulfanyl-L-aspartate(89)-[ribosomal protein uS12]-hydrogen + (sulfur carrier)-H + 5'-deoxyadenosine + L-methionine + A + S-adenosyl-L-homocysteine + 2 H(+). In terms of biological role, catalyzes the methylthiolation of an aspartic acid residue of ribosomal protein uS12. This is Ribosomal protein uS12 methylthiotransferase RimO from Psychrobacter cryohalolentis (strain ATCC BAA-1226 / DSM 17306 / VKM B-2378 / K5).